Consider the following 374-residue polypeptide: WAT1-related protein At1g60050 (374 aa).

10 consecutive transmembrane segments (helical) span residues 11–31, 42–62, 82–102, 107–127, 145–165, 194–214, 228–248, 255–275, 292–312, and 315–335; these read IVPFIVMALMEACTIALTILA, FVFIVYTNALGSLLLLPYSFY, IFLLGFTGVFLFQNMAFLGLS, IVVCAMGLQSPAFSFLLSLAL, IGTLICFTGAFVEVIYLGPFI, WALGSLLLACATLSISIWNII, VVSAYSLAGTLQCAIFSAFME, ELKLNMDLYLIIATGIFGSII, VPLFKPFGILWASIFGTSFFV, and LHYGSVLGAAIAGTGYLLIMW. Residues 26–155 form the EamA domain; the sequence is ALTILAKTAL…GTLICFTGAF (130 aa).

It belongs to the drug/metabolite transporter (DMT) superfamily. Plant drug/metabolite exporter (P-DME) (TC 2.A.7.4) family.

It localises to the membrane. This is WAT1-related protein At1g60050 from Arabidopsis thaliana (Mouse-ear cress).